The primary structure comprises 189 residues: Inner membrane-spanning protein YciB (189 aa).

5 helical membrane passes run 23-43, 54-74, 82-102, 120-140, and 150-170; these read ILLA…FVWW, ITLA…DAAF, VNWL…KTLI, LNLA…YVFK, and FKLF…GVYL.

This sequence belongs to the YciB family.

It localises to the cell inner membrane. Functionally, plays a role in cell envelope biogenesis, maintenance of cell envelope integrity and membrane homeostasis. This chain is Inner membrane-spanning protein YciB, found in Chromohalobacter salexigens (strain ATCC BAA-138 / DSM 3043 / CIP 106854 / NCIMB 13768 / 1H11).